A 319-amino-acid chain; its full sequence is uncharacterized protein (319 aa).

The 143-residue stretch at 36–178 folds into the SIS domain; it reads IIEFLLSFKG…MTVIHEERGF (143 aa). 51–56 is an ATP binding site; that stretch reads GIGKSG. 2 CBS domains span residues 203–263 and 268–319; these read MRSG…HLKT and MTKN…MGVS.

Belongs to the SIS family. GutQ/KpsF subfamily.

This is an uncharacterized protein from Rickettsia prowazekii (strain Madrid E).